Consider the following 499-residue polypeptide: Glycerol kinase (499 aa).

T13 is an ADP binding site. ATP-binding residues include T13, T14, and S15. Position 13 (T13) interacts with sn-glycerol 3-phosphate. An ADP-binding site is contributed by R17. The sn-glycerol 3-phosphate site is built by R83, E84, Y135, and D244. Glycerol-binding residues include R83, E84, Y135, D244, and Q245. ADP is bound by residues T266 and G310. Residues T266, G310, Q314, and G411 each coordinate ATP. ADP is bound by residues G411 and N415.

It belongs to the FGGY kinase family.

The enzyme catalyses glycerol + ATP = sn-glycerol 3-phosphate + ADP + H(+). It participates in polyol metabolism; glycerol degradation via glycerol kinase pathway; sn-glycerol 3-phosphate from glycerol: step 1/1. Inhibited by fructose 1,6-bisphosphate (FBP). Its function is as follows. Key enzyme in the regulation of glycerol uptake and metabolism. Catalyzes the phosphorylation of glycerol to yield sn-glycerol 3-phosphate. This chain is Glycerol kinase, found in Pseudothermotoga lettingae (strain ATCC BAA-301 / DSM 14385 / NBRC 107922 / TMO) (Thermotoga lettingae).